The chain runs to 315 residues: Replication factor C small subunit (315 aa).

43-50 (GSPGVGKT) lines the ATP pocket.

It belongs to the activator 1 small subunits family. RfcS subfamily. As to quaternary structure, heteromultimer composed of small subunits (RfcS) and large subunits (RfcL).

In terms of biological role, part of the RFC clamp loader complex which loads the PCNA sliding clamp onto DNA. The protein is Replication factor C small subunit of Methanococcus maripaludis (strain C6 / ATCC BAA-1332).